Reading from the N-terminus, the 667-residue chain is DNA ligase (667 aa).

NAD(+)-binding positions include 32–36 (DSEYD), 81–82 (SL), and Glu110. The active-site N6-AMP-lysine intermediate is the Lys112. NAD(+) contacts are provided by Arg133, Glu167, Lys283, and Lys307. Zn(2+) is bound by residues Cys401, Cys404, Cys419, and Cys424. Residues 586-667 (EGHPEFSGKT…FVDKQNELNS (82 aa)) enclose the BRCT domain.

It belongs to the NAD-dependent DNA ligase family. LigA subfamily. It depends on Mg(2+) as a cofactor. Mn(2+) is required as a cofactor.

The enzyme catalyses NAD(+) + (deoxyribonucleotide)n-3'-hydroxyl + 5'-phospho-(deoxyribonucleotide)m = (deoxyribonucleotide)n+m + AMP + beta-nicotinamide D-nucleotide.. Functionally, DNA ligase that catalyzes the formation of phosphodiester linkages between 5'-phosphoryl and 3'-hydroxyl groups in double-stranded DNA using NAD as a coenzyme and as the energy source for the reaction. It is essential for DNA replication and repair of damaged DNA. The chain is DNA ligase from Staphylococcus aureus (strain Mu3 / ATCC 700698).